A 205-amino-acid polypeptide reads, in one-letter code: Ribosomal RNA small subunit methyltransferase G (205 aa).

S-adenosyl-L-methionine-binding positions include Gly-66, Phe-71, 119 to 120 (IE), and Arg-135.

Belongs to the methyltransferase superfamily. RNA methyltransferase RsmG family.

It localises to the cytoplasm. It catalyses the reaction guanosine(527) in 16S rRNA + S-adenosyl-L-methionine = N(7)-methylguanosine(527) in 16S rRNA + S-adenosyl-L-homocysteine. Its function is as follows. Specifically methylates the N7 position of guanine in position 527 of 16S rRNA. In Rhizobium rhizogenes (strain K84 / ATCC BAA-868) (Agrobacterium radiobacter), this protein is Ribosomal RNA small subunit methyltransferase G.